A 427-amino-acid polypeptide reads, in one-letter code: O-methyltransferase PaMT (427 aa).

S-adenosyl-L-methionine contacts are provided by W230 and D281. H326 serves as the catalytic Proton acceptor.

This sequence belongs to the class I-like SAM-binding methyltransferase superfamily. Cation-independent O-methyltransferase family. COMT subfamily. S-adenosyl-L-methionine is required as a cofactor.

The protein operates within mycotoxin biosynthesis. Functionally, O-methyltransferase; part of the 2 gene clusters that mediate the biosynthesis of fusicoccins, diterpene glucosides that display phytohormone-like activity and function as potent activators of plasma membrane H(+)-ATPases in plants by modifying 14-3-3 proteins and cause the plant disease constriction canker. The first step in the pathway is performed by the fusicoccadiene synthase PaFS that possesses both prenyl transferase and terpene cyclase activity, converting isopentenyl diphosphate and dimethylallyl diphosphate into geranylgeranyl diphosphate (GGDP) and successively converting GGDP into fusicocca-2,10(14)-diene, a precursor for fusicoccin H. The second step is the oxidation at the C-8 position by the cytochrome P450 monooxygenase PaP450-2 to yield fusicocca-2,10(14)-diene-8-beta-ol. The cytochrome P450 monooxygenase PaP450-1 then catalyzes the hydroxylation at the C-16 position to produce fusicocca-2,10(14)-diene-8-beta,16-diol. The dioxygenase fc-dox then catalyzes the 16-oxydation of fusicocca-2,10(14)-diene-8-beta,16-diol to yield an aldehyde (8-beta-hydroxyfusicocca-1,10(14)-dien-16-al). The short-chain dehydrogenase/reductase fc-sdr catalyzes the reduction of the aldehyde to yield fusicocca-1,10(14)-diene-8-beta,16-diol. The next step is the hydroxylation at C-9 performed by the cytochrome P450 monooxygenase PaP450-3 that leads to fusicoccin H aglycon which is glycosylated to fusicoccin H by the O-glycosyltransferase PaGT. Hydroxylation at C-12 by the cytochrome P450 monooxygenase PaP450-4 leads then to the production of fusicoccin Q and is followed by methylation by the O-methyltransferase PaMT to yield fusicoccin P. Fusicoccin P is further converted to fusicoccin J via prenylation by the O-glucose prenyltransferase PaPT. Cytochrome P450 monooxygenase PaP450-5 then performs hydroxylation at C-19 to yield dideacetyl-fusicoccin A which is acetylated to 3'-O-deacetyl-fusicoccin A by the O-acetyltransferase PaAT-2. Finally, a another acetylation by the O-acetyltransferase PaAT-1 yields fusicoccin A. The polypeptide is O-methyltransferase PaMT (Phomopsis amygdali (Fusicoccum amygdali)).